Reading from the N-terminus, the 283-residue chain is Shikimate kinase (283 aa).

ATP is bound at residue 86-96 (PIKSGLSSSSA).

It belongs to the GHMP kinase family. Archaeal shikimate kinase subfamily.

Its subcellular location is the cytoplasm. It carries out the reaction shikimate + ATP = 3-phosphoshikimate + ADP + H(+). It functions in the pathway metabolic intermediate biosynthesis; chorismate biosynthesis; chorismate from D-erythrose 4-phosphate and phosphoenolpyruvate: step 5/7. This chain is Shikimate kinase, found in Methanococcus maripaludis (strain C5 / ATCC BAA-1333).